A 140-amino-acid chain; its full sequence is L-fucose mutarotase (140 aa).

The active-site Proton donor is histidine 22. Substrate-binding positions include aspartate 30, arginine 107, and 129-131 (YGN).

It belongs to the RbsD / FucU family. FucU mutarotase subfamily. As to quaternary structure, homodecamer.

The protein localises to the cytoplasm. It catalyses the reaction alpha-L-fucose = beta-L-fucose. The protein operates within carbohydrate metabolism; L-fucose metabolism. Its function is as follows. Involved in the anomeric conversion of L-fucose. The sequence is that of L-fucose mutarotase from Shigella boydii serotype 18 (strain CDC 3083-94 / BS512).